The primary structure comprises 253 residues: RNA polymerase sigma factor SigI6 (253 aa).

A Polymerase core binding motif is present at residues 63 to 76 (EEYSVALLAFNEAI). A DNA-binding region (H-T-H motif) is located at residues 203 to 222 (TLELLKLAKVSRRTIERNKK).

The protein belongs to the sigma-70 factor family. SigI subfamily. In terms of assembly, interacts with RsgI6.

It localises to the cytoplasm. Negatively regulated by the anti-sigma-I factor RsgI6. Binding of the polysaccharide substrate to RsgI6 may lead to the release and activation of SigI6. Its function is as follows. Sigma factors are initiation factors that promote the attachment of RNA polymerase to specific initiation sites and are then released. This sigma factor is involved in regulation of cellulosomal genes via an external polysaccharide-sensing mechanism. Recognizes the predicted promoters associated with sigI6 itself, xyn11B, xyn10D, xyn10Z, xyn10Y, cel9V, cseP, sigI1, cipA, and rsgI5. The sequence is that of RNA polymerase sigma factor SigI6 from Acetivibrio thermocellus (strain ATCC 27405 / DSM 1237 / JCM 9322 / NBRC 103400 / NCIMB 10682 / NRRL B-4536 / VPI 7372) (Clostridium thermocellum).